The primary structure comprises 402 residues: Protein PMR5 (402 aa).

A helical; Signal-anchor for type II membrane protein membrane pass occupies residues 7–23 (LLGISVVSAIFFLVLQQ). A disordered region spans residues 40-60 (GSSSGSSGNQYSSSRPSAGFQ). Positions 41 to 56 (SSSGSSGNQYSSSRPS) are enriched in low complexity. Residues 140 to 142 (GDS) carry the GDS motif motif. Residues 379–393 (DCSHWCLPGLPDTWN) carry the DCXHWCLPGXXDXWN motif motif.

It belongs to the PC-esterase family. TBL subfamily. As to expression, expressed in flowers, siliques, stems and leaves.

It localises to the membrane. Functionally, required for nonhost resistance (NHR) during plant-microbe interactions. Plants mutated in PMR5 are resistant to powdery mildew species. May act as a bridging protein that binds pectin and other cell wall polysaccharides. Probably involved in maintaining esterification of pectins. May be involved in the specific O-acetylation of cell wall polymers. This is Protein PMR5 (PMR5) from Arabidopsis thaliana (Mouse-ear cress).